Reading from the N-terminus, the 229-residue chain is Small ribosomal subunit protein uS5 (229 aa).

The S5 DRBM domain maps to 61-124; the sequence is LEEQVLDVKL…AHAKLSLIKV (64 aa).

This sequence belongs to the universal ribosomal protein uS5 family. As to quaternary structure, part of the 30S ribosomal subunit. Contacts protein S4.

Its function is as follows. With S4 and S12 plays an important role in translational accuracy. The polypeptide is Small ribosomal subunit protein uS5 (Methanococcus maripaludis (strain C7 / ATCC BAA-1331)).